The following is a 159-amino-acid chain: Transcription antitermination protein NusB (159 aa).

This sequence belongs to the NusB family.

Functionally, involved in transcription antitermination. Required for transcription of ribosomal RNA (rRNA) genes. Binds specifically to the boxA antiterminator sequence of the ribosomal RNA (rrn) operons. The sequence is that of Transcription antitermination protein NusB from Stenotrophomonas maltophilia (strain K279a).